The following is a 423-amino-acid chain: Replication factor C large subunit (423 aa).

50–57 serves as a coordination point for ATP; the sequence is GPAGCGKT.

It belongs to the activator 1 small subunits family. RfcL subfamily. In terms of assembly, heteromultimer composed of small subunits (RfcS) and large subunits (RfcL).

Part of the RFC clamp loader complex which loads the PCNA sliding clamp onto DNA. The polypeptide is Replication factor C large subunit (Staphylothermus marinus (strain ATCC 43588 / DSM 3639 / JCM 9404 / F1)).